The following is a 271-amino-acid chain: L-aspartate dehydrogenase (271 aa).

2 residues coordinate NAD(+): Ala124 and Asn192. Residue His222 is part of the active site.

Belongs to the L-aspartate dehydrogenase family.

The enzyme catalyses L-aspartate + NADP(+) + H2O = oxaloacetate + NH4(+) + NADPH + H(+). It catalyses the reaction L-aspartate + NAD(+) + H2O = oxaloacetate + NH4(+) + NADH + H(+). The protein operates within cofactor biosynthesis; NAD(+) biosynthesis; iminoaspartate from L-aspartate (dehydrogenase route): step 1/1. Specifically catalyzes the NAD or NADP-dependent dehydrogenation of L-aspartate to iminoaspartate. This chain is L-aspartate dehydrogenase, found in Methanococcoides burtonii (strain DSM 6242 / NBRC 107633 / OCM 468 / ACE-M).